The chain runs to 427 residues: Glutamate-1-semialdehyde 2,1-aminomutase (427 aa).

Position 265 is an N6-(pyridoxal phosphate)lysine (Lys-265).

The protein belongs to the class-III pyridoxal-phosphate-dependent aminotransferase family. HemL subfamily. As to quaternary structure, homodimer. It depends on pyridoxal 5'-phosphate as a cofactor.

The protein localises to the cytoplasm. The enzyme catalyses (S)-4-amino-5-oxopentanoate = 5-aminolevulinate. The protein operates within porphyrin-containing compound metabolism; protoporphyrin-IX biosynthesis; 5-aminolevulinate from L-glutamyl-tRNA(Glu): step 2/2. The protein is Glutamate-1-semialdehyde 2,1-aminomutase of Burkholderia orbicola (strain MC0-3).